A 270-amino-acid chain; its full sequence is MLNYMERSKHQQFPFHLVNPSPWPIVVSFSLLSLALSLGLTMHGYIGEMYLVNLALLVVLGSGVLWFRDIIAEATYLGDHTAAVRKGINIGFLLFVLSEVLIFSALFWSYFHSAMSPDVTLGACWPPVGITAVQPTELPLLNTIILLASGATVTYSHHALIQGNRKNSLSGLLITTWLIIIFVICQYIEYTNATFTISDGVYGSVFFAGTGLHFLHMVMLAIMLAVCYWRLRNYHLTNSHHVGYETTIIYLHVLDVIWLFLYIVFYWWGV.

7 helical membrane-spanning segments follow: residues 22-42 (PWPI…GLTM), 46-66 (IGEM…GVLW), 88-108 (INIG…ALFW), 128-148 (VGIT…ILLA), 168-188 (SLSG…CQYI), 205-225 (VFFA…IMLA), and 248-268 (IIYL…FYWW).

This sequence belongs to the cytochrome c oxidase subunit 3 family. In terms of assembly, component of the cytochrome c oxidase (complex IV, CIV), a multisubunit enzyme composed of a catalytic core of 3 subunits and several supernumerary subunits. The complex exists as a monomer or a dimer and forms supercomplexes (SCs) in the inner mitochondrial membrane with ubiquinol-cytochrome c oxidoreductase (cytochrome b-c1 complex, complex III, CIII).

Its subcellular location is the mitochondrion inner membrane. It catalyses the reaction 4 Fe(II)-[cytochrome c] + O2 + 8 H(+)(in) = 4 Fe(III)-[cytochrome c] + 2 H2O + 4 H(+)(out). In terms of biological role, component of the cytochrome c oxidase, the last enzyme in the mitochondrial electron transport chain which drives oxidative phosphorylation. The respiratory chain contains 3 multisubunit complexes succinate dehydrogenase (complex II, CII), ubiquinol-cytochrome c oxidoreductase (cytochrome b-c1 complex, complex III, CIII) and cytochrome c oxidase (complex IV, CIV), that cooperate to transfer electrons derived from NADH and succinate to molecular oxygen, creating an electrochemical gradient over the inner membrane that drives transmembrane transport and the ATP synthase. Cytochrome c oxidase is the component of the respiratory chain that catalyzes the reduction of oxygen to water. Electrons originating from reduced cytochrome c in the intermembrane space (IMS) are transferred via the dinuclear copper A center (CU(A)) of subunit 2 and heme A of subunit 1 to the active site in subunit 1, a binuclear center (BNC) formed by heme A3 and copper B (CU(B)). The BNC reduces molecular oxygen to 2 water molecules using 4 electrons from cytochrome c in the IMS and 4 protons from the mitochondrial matrix. The protein is Cytochrome c oxidase subunit 3 (COX3) of Vanderwaltozyma polyspora (strain ATCC 22028 / DSM 70294 / BCRC 21397 / CBS 2163 / NBRC 10782 / NRRL Y-8283 / UCD 57-17) (Kluyveromyces polysporus).